Reading from the N-terminus, the 215-residue chain is HTH-type transcriptional repressor FabR (215 aa).

Residues 10–70 (KTRRSLVEAA…TMVDESGLML (61 aa)) form the HTH tetR-type domain. The segment at residues 33–52 (SLREVAREAGIAPTSFYRHF) is a DNA-binding region (H-T-H motif).

In terms of assembly, homodimer.

Its subcellular location is the cytoplasm. Its function is as follows. Represses the transcription of fabB, involved in unsaturated fatty acid (UFA) biosynthesis. By controlling UFA production, FabR directly influences the physical properties of the membrane bilayer. The protein is HTH-type transcriptional repressor FabR of Escherichia coli O139:H28 (strain E24377A / ETEC).